The following is a 450-amino-acid chain: 23S rRNA (uracil(1939)-C(5))-methyltransferase RlmD (450 aa).

The region spanning 12 to 70 (SKQLSAKLSLSVNQLDHLGAGIAQHQGKVVFIPGALPDETVTVQLTEQKKNYARAKLIK) is the TRAM domain. [4Fe-4S] cluster is bound by residues Cys83, Cys89, Cys92, and Cys171. 6 residues coordinate S-adenosyl-L-methionine: Gln283, Phe312, Asn317, Glu333, Asp360, and Asp380. Cys406 serves as the catalytic Nucleophile.

It belongs to the class I-like SAM-binding methyltransferase superfamily. RNA M5U methyltransferase family. RlmD subfamily.

It carries out the reaction uridine(1939) in 23S rRNA + S-adenosyl-L-methionine = 5-methyluridine(1939) in 23S rRNA + S-adenosyl-L-homocysteine + H(+). Catalyzes the formation of 5-methyl-uridine at position 1939 (m5U1939) in 23S rRNA. This is 23S rRNA (uracil(1939)-C(5))-methyltransferase RlmD from Shewanella baltica (strain OS195).